A 530-amino-acid chain; its full sequence is Tyrosinase (530 aa).

The signal sequence occupies residues 1-17; the sequence is MLLAALYCLLWSFRTSA. Topologically, residues 19–473 are lumenal, melanosome; sequence HFPRACASSK…IKPYLEQAQR (455 aa). Asn-86 is a glycosylation site (N-linked (GlcNAc...) asparagine). His-180, His-202, and His-211 together coordinate Cu cation. Asn-230, Asn-290, and Asn-337 each carry an N-linked (GlcNAc...) asparagine glycan. 2 residues coordinate Cu cation: His-363 and His-367. Residue Asn-371 is glycosylated (N-linked (GlcNAc...) asparagine). His-390 lines the Cu cation pocket. A helical transmembrane segment spans residues 474-494; it reads IWPWLIGAAVVGSVLTAVLGG. Over 495–530 the chain is Cytoplasmic; it reads LTSLLCRRKRNQLPEEKQPLLMEKEDYHNLMYQSHL.

The protein belongs to the tyrosinase family. Forms an OPN3-dependent complex with DCT in response to blue light in melanocytes. Cu(2+) is required as a cofactor. In terms of processing, glycosylated.

Its subcellular location is the melanosome membrane. The protein resides in the melanosome. It catalyses the reaction 2 L-dopa + O2 = 2 L-dopaquinone + 2 H2O. The enzyme catalyses L-tyrosine + O2 = L-dopaquinone + H2O. The catalysed reaction is 2 5,6-dihydroxyindole-2-carboxylate + O2 = 2 indole-5,6-quinone-2-carboxylate + 2 H2O. In terms of biological role, this is a copper-containing oxidase that functions in the formation of pigments such as melanins and other polyphenolic compounds. Catalyzes the initial and rate limiting step in the cascade of reactions leading to melanin production from tyrosine. In addition to hydroxylating tyrosine to DOPA (3,4-dihydroxyphenylalanine), also catalyzes the oxidation of DOPA to DOPA-quinone, and possibly the oxidation of DHI (5,6-dihydroxyindole) to indole-5,6 quinone. The chain is Tyrosinase (TYR) from Bos taurus (Bovine).